Here is a 161-residue protein sequence, read N- to C-terminus: Phosphopantetheine adenylyltransferase (161 aa).

Belongs to the eukaryotic CoaD family.

The protein resides in the cytoplasm. The enzyme catalyses (R)-4'-phosphopantetheine + ATP + H(+) = 3'-dephospho-CoA + diphosphate. Its pathway is cofactor biosynthesis; coenzyme A biosynthesis. Functionally, reversibly transfers an adenylyl group from ATP to 4'-phosphopantetheine, yielding dephospho-CoA (dPCoA) and pyrophosphate. This Methanosarcina barkeri (strain Fusaro / DSM 804) protein is Phosphopantetheine adenylyltransferase.